The sequence spans 444 residues: Phosphoglucosamine mutase (444 aa).

The active-site Phosphoserine intermediate is the Ser104. Ser104, Asp243, Asp245, and Asp247 together coordinate Mg(2+). Residue Ser104 is modified to Phosphoserine.

It belongs to the phosphohexose mutase family. Mg(2+) is required as a cofactor. Post-translationally, activated by phosphorylation.

The catalysed reaction is alpha-D-glucosamine 1-phosphate = D-glucosamine 6-phosphate. In terms of biological role, catalyzes the conversion of glucosamine-6-phosphate to glucosamine-1-phosphate. The polypeptide is Phosphoglucosamine mutase (Neisseria gonorrhoeae (strain ATCC 700825 / FA 1090)).